The primary structure comprises 364 residues: Inactive protein RESTRICTED TEV MOVEMENT 2 (364 aa).

The sHSP domain maps to 14 to 121 (VQYEDFVPKS…LPETSRTEAA (108 aa)). An A-1 repeat occupies 129–133 (LEEKR). Residues 129–220 (LEEKRLLEES…LEERRLEERK (92 aa)) are 6 X 5 AA repeats A of L-E-E-[SKR]-[ERK]. An A-2 repeat occupies 135-139 (LEESR). One copy of the A-3 repeat lies at 156–160 (LEEKE). One copy of the B-1 repeat lies at 163–176 (IRKLQEEAKAKEEA). The interval 163–206 (IRKLQEEAKAKEEAEMRKLQEEAKAKEEAAAKKLQEEIEAKEKL) is 3 X 14 AA repeats B of [IMA]-[RK]-K-L-Q-E-E-A-K-A-K-E-[EK]-[LA]. A B-2 repeat occupies 178–191 (MRKLQEEAKAKEEA). A B-3 repeat occupies 193-205 (AKKLQEEIEAKEK). One copy of the A-4 repeat lies at 206-210 (LEERK). The A-5 repeat unit spans residues 211–215 (LEERR). An A-6 repeat occupies 216–220 (LEERK). Residues 322-342 (LMMNVGVAALVIFALGAYVSY) form a helical membrane-spanning segment. The disordered stretch occupies residues 345–364 (CSSSSSSSSPSSSSSSTKPE). A compositionally biased stretch (low complexity) spans 346–364 (SSSSSSSSPSSSSSSTKPE).

This sequence belongs to the small heat shock protein (HSP20) family.

The protein resides in the cell membrane. Seems to not be involved in heat resistance. Unable to mediate restriction of long-distance movement of the pathogenic tobacco etch virus (TEV) without causing a hypersensitive response or inducing systemic acquired resistance. This chain is Inactive protein RESTRICTED TEV MOVEMENT 2 (RTM2), found in Arabidopsis thaliana (Mouse-ear cress).